We begin with the raw amino-acid sequence, 515 residues long: 1-pyrroline-5-carboxylate dehydrogenase (515 aa).

Active-site residues include glutamate 286 and cysteine 320.

It belongs to the aldehyde dehydrogenase family. RocA subfamily.

The enzyme catalyses L-glutamate 5-semialdehyde + NAD(+) + H2O = L-glutamate + NADH + 2 H(+). It participates in amino-acid degradation; L-proline degradation into L-glutamate; L-glutamate from L-proline: step 2/2. This chain is 1-pyrroline-5-carboxylate dehydrogenase, found in Geobacillus kaustophilus (strain HTA426).